A 402-amino-acid chain; its full sequence is MALRPSKGDGSAGRWDRGAGKADFNAKRKKKVAEIHQALNSDPIDLAALRRMAISEGGLLTDEIRCQVWPKLLNVNTSEPPPVSRKDLRDMSKDYQQVLLDVRRSLRRFPPGMPDEQREGLQEELIDIILLVLDRNPQLHYYQGYHDIVVTFLLVVGERLATSLVEKLSTHHLRDFMDPTMDNTKHILNYLMPIIDQVSPELHDFMQSAEVGTIFALSWLITWFGHVLMDFRHVVRLYDFFLACHPLMPIYFAAVIVLYREQEVLDCDCDMASVHHLLSQIPQDLPYETLISRAGDLFVQFPPSELAREAAAQQEAERTAASTFKDFELASTQQRPDMVLRQRFRGLLRPEARTKDVLTKPRTNRFVKLAVMGLTVALGAAALAVVKSALEWAPKFQLQLFP.

A disordered region spans residues 1–27 (MALRPSKGDGSAGRWDRGAGKADFNAK). The span at 14–26 (RWDRGAGKADFNA) shows a compositional bias: basic and acidic residues. The 187-residue stretch at 59–245 (LLTDEIRCQV…RLYDFFLACH (187 aa)) folds into the Rab-GAP TBC domain. Helical transmembrane passes span 237-257 (LYDF…AVIV) and 366-386 (FVKL…LAVV).

The protein resides in the membrane. Its function is as follows. GTPase-activating protein specific for Rab1 and Rab2 small GTPase families for which it can accelerate the intrinsic GTP hydrolysis rate by more than five orders of magnitude. Also shows GAP activity for RAB18 GTPase. Promotes RAB18 dissociation from the endoplasmic reticulum (ER) membrane into the cytosol, probably through stimulating RAB18 GTP-hydrolysis. Involved in maintaining endoplasmic reticulum structure. The chain is TBC1 domain family member 20 from Mus musculus (Mouse).